The following is a 277-amino-acid chain: Putative pyruvate, phosphate dikinase regulatory protein (277 aa).

Position 151-158 (151-158 (GISRTSKT)) interacts with ADP.

Belongs to the pyruvate, phosphate/water dikinase regulatory protein family. PDRP subfamily.

The catalysed reaction is N(tele)-phospho-L-histidyl/L-threonyl-[pyruvate, phosphate dikinase] + ADP = N(tele)-phospho-L-histidyl/O-phospho-L-threonyl-[pyruvate, phosphate dikinase] + AMP + H(+). It catalyses the reaction N(tele)-phospho-L-histidyl/O-phospho-L-threonyl-[pyruvate, phosphate dikinase] + phosphate + H(+) = N(tele)-phospho-L-histidyl/L-threonyl-[pyruvate, phosphate dikinase] + diphosphate. In terms of biological role, bifunctional serine/threonine kinase and phosphorylase involved in the regulation of the pyruvate, phosphate dikinase (PPDK) by catalyzing its phosphorylation/dephosphorylation. This is Putative pyruvate, phosphate dikinase regulatory protein from Alkaliphilus metalliredigens (strain QYMF).